Consider the following 132-residue polypeptide: Myelin P2 protein (132 aa).

Ser-2 carries the N-acetylserine modification. Residues Arg-107 and 127-129 (RIY) contribute to the (9Z)-octadecenoate site. Hexadecanoate is bound by residues Arg-107 and 127-129 (RIY).

This sequence belongs to the calycin superfamily. Fatty-acid binding protein (FABP) family. In terms of assembly, monomer.

It localises to the cytoplasm. May play a role in lipid transport protein in Schwann cells. May bind cholesterol. The polypeptide is Myelin P2 protein (PMP2) (Oryctolagus cuniculus (Rabbit)).